Consider the following 72-residue polypeptide: Toxin Acra II-3 (72 aa).

Positions 4–67 constitute an LCN-type CS-alpha/beta domain; the sequence is PGNYPLDTRG…VWNAAKNYCK (64 aa). 3 cysteine pairs are disulfide-bonded: Cys-18–Cys-41, Cys-27–Cys-46, and Cys-31–Cys-48.

It belongs to the long (3 C-C) scorpion toxin superfamily. Sodium channel inhibitor family. Beta subfamily. In terms of tissue distribution, expressed by the venom gland.

The protein resides in the secreted. Functionally, binds to sodium channels (Nav) and affects the channel activation process. This Androctonus crassicauda (Arabian fat-tailed scorpion) protein is Toxin Acra II-3.